We begin with the raw amino-acid sequence, 80 residues long: Acyl carrier protein (80 aa).

Residues 4 to 79 (EAILEKVRSI…DAVKYIEDKQ (76 aa)) form the Carrier domain. Residue Ser-39 is modified to O-(pantetheine 4'-phosphoryl)serine.

The protein belongs to the acyl carrier protein (ACP) family. In terms of processing, 4'-phosphopantetheine is transferred from CoA to a specific serine of apo-ACP by AcpS. This modification is essential for activity because fatty acids are bound in thioester linkage to the sulfhydryl of the prosthetic group.

It localises to the cytoplasm. The protein operates within lipid metabolism; fatty acid biosynthesis. Functionally, carrier of the growing fatty acid chain in fatty acid biosynthesis. This Prochlorococcus marinus (strain MIT 9313) protein is Acyl carrier protein.